A 588-amino-acid chain; its full sequence is Aspartate--tRNA(Asp/Asn) ligase (588 aa).

Position 172 (Glu-172) interacts with L-aspartate. The interval 196–199 is aspartate; sequence QLFK. Residue Arg-218 participates in L-aspartate binding. ATP is bound by residues 218 to 220 and Gln-227; that span reads RDE. His-450 serves as a coordination point for L-aspartate. Glu-484 serves as a coordination point for ATP. Arg-491 contacts L-aspartate. 536–539 provides a ligand contact to ATP; sequence GLDR.

It belongs to the class-II aminoacyl-tRNA synthetase family. Type 1 subfamily. As to quaternary structure, homodimer.

It is found in the cytoplasm. It catalyses the reaction tRNA(Asx) + L-aspartate + ATP = L-aspartyl-tRNA(Asx) + AMP + diphosphate. In terms of biological role, aspartyl-tRNA synthetase with relaxed tRNA specificity since it is able to aspartylate not only its cognate tRNA(Asp) but also tRNA(Asn). Reaction proceeds in two steps: L-aspartate is first activated by ATP to form Asp-AMP and then transferred to the acceptor end of tRNA(Asp/Asn). This chain is Aspartate--tRNA(Asp/Asn) ligase, found in Nitrosospira multiformis (strain ATCC 25196 / NCIMB 11849 / C 71).